The primary structure comprises 345 residues: Phosphoribosylformylglycinamidine cyclo-ligase (345 aa).

It belongs to the AIR synthase family.

It localises to the cytoplasm. The enzyme catalyses 2-formamido-N(1)-(5-O-phospho-beta-D-ribosyl)acetamidine + ATP = 5-amino-1-(5-phospho-beta-D-ribosyl)imidazole + ADP + phosphate + H(+). Its pathway is purine metabolism; IMP biosynthesis via de novo pathway; 5-amino-1-(5-phospho-D-ribosyl)imidazole from N(2)-formyl-N(1)-(5-phospho-D-ribosyl)glycinamide: step 2/2. The protein is Phosphoribosylformylglycinamidine cyclo-ligase of Escherichia coli O45:K1 (strain S88 / ExPEC).